Consider the following 261-residue polypeptide: Thiazole synthase (261 aa).

Lysine 102 serves as the catalytic Schiff-base intermediate with DXP. 1-deoxy-D-xylulose 5-phosphate-binding positions include glycine 163, 189–190, and 211–212; these read AG and NT.

Belongs to the ThiG family. In terms of assembly, homotetramer. Forms heterodimers with either ThiH or ThiS.

It localises to the cytoplasm. It catalyses the reaction [ThiS sulfur-carrier protein]-C-terminal-Gly-aminoethanethioate + 2-iminoacetate + 1-deoxy-D-xylulose 5-phosphate = [ThiS sulfur-carrier protein]-C-terminal Gly-Gly + 2-[(2R,5Z)-2-carboxy-4-methylthiazol-5(2H)-ylidene]ethyl phosphate + 2 H2O + H(+). It functions in the pathway cofactor biosynthesis; thiamine diphosphate biosynthesis. Catalyzes the rearrangement of 1-deoxy-D-xylulose 5-phosphate (DXP) to produce the thiazole phosphate moiety of thiamine. Sulfur is provided by the thiocarboxylate moiety of the carrier protein ThiS. In vitro, sulfur can be provided by H(2)S. The chain is Thiazole synthase from Acinetobacter baumannii (strain SDF).